A 343-amino-acid polypeptide reads, in one-letter code: Heat-inducible transcription repressor HrcA (343 aa).

The protein belongs to the HrcA family.

Its function is as follows. Negative regulator of class I heat shock genes (grpE-dnaK-dnaJ and groELS operons). Prevents heat-shock induction of these operons. This chain is Heat-inducible transcription repressor HrcA, found in Mycolicibacterium vanbaalenii (strain DSM 7251 / JCM 13017 / BCRC 16820 / KCTC 9966 / NRRL B-24157 / PYR-1) (Mycobacterium vanbaalenii).